Reading from the N-terminus, the 344-residue chain is Secreted LysM effector LysM2 (344 aa).

The N-terminal stretch at 1-24 is a signal peptide; that stretch reads MMAPKSLQTGLLILLLAKLKLAWG. One can recognise a LysM 1 domain in the interval 36-80; sequence YEAAASSGDTCTSFAAEWGLTEETFASLNPSAACPSLVAGQNYCM. A compositionally biased stretch (low complexity) spans 88–134; it reads STTSSSSSTTSSSTTSSSTTSSSTTSSSTTTSSFTTTTASETTSTAA. Residues 88–141 are disordered; that stretch reads STTSSSSSTTSSSTTSSSTTSSSTTSSSTTTSSFTTTTASETTSTAANGVTTPM. LysM domains are found at residues 153–199, 216–262, and 296–342; these read KFDL…YVCV and KFWL…YICV.

This sequence belongs to the secreted LysM effector family.

Might have a role in sequestration of chitin oligosaccharides (breakdown products of fungal cell walls that are released during invasion and act as triggers of host immunity) to dampen host defense. The protein is Secreted LysM effector LysM2 of Penicillium expansum (Blue mold rot fungus).